The primary structure comprises 484 residues: Fork head protein homolog 1 (484 aa).

The FHA domain occupies 76-142; sequence VTIGRNTDSL…NGAKVNFRRI (67 aa). Positions 302–393 form a DNA-binding region, fork-head; the sequence is IKPPQSYASM…RRDFLNKWNA (92 aa).

As to quaternary structure, interacts (via FHA domain) with ECM30, GLN3, URE2, MPH1 AND FDO1. Interacts with the origin recognition complex (ORC) composed of ORC1 to ORC6.

It localises to the nucleus. It is found in the cytoplasm. Its subcellular location is the cytosol. Transcription factor that regulates the expression of the CLB2 cluster of genes during the G2/M phase of the mitotic cell cycle. The CLB2 cluster of genes includes mitotic regulators such as CLB1, CLB2, CDC5 and CDC20 as well as SWI5 and ACE2, transcription factors required for the subsequent temporal wave of cell cycle regulated gene expression in the M/G1 phase interval. Involved in HMRa silencing. FKH1 and FKH2 associate with the coding regions of active genes and influence, in opposing ways, transcriptional elongation and termination, and coordinate early transcription elongation and pre-mRNA processing. Both FKH1 and FKH2 play a role as regulators of lifespan in collaboration with the anaphase-promoting complex (APC), likely through combined regulation of stress response, genomic stability, and cell cycle regulation. FKH1 and FKH2 function also in controlling yeast cell morphology by preventing preudohyphal growth. Acts as a rate-limiting replication origin activator via its interaction with the origin recognition complex (ORC). Plays a transcription-independent role in recombination donor preference during mating-type switching through binding to the recombination enhancer (RE), a 700-bp cis-acting element that controls recombination along the left arm of chromosome III. This Saccharomyces cerevisiae (strain ATCC 204508 / S288c) (Baker's yeast) protein is Fork head protein homolog 1.